The primary structure comprises 430 residues: Enolase (430 aa).

Glutamine 163 lines the (2R)-2-phosphoglycerate pocket. Glutamate 205 acts as the Proton donor in catalysis. Residues aspartate 242, glutamate 288, and aspartate 315 each coordinate Mg(2+). (2R)-2-phosphoglycerate contacts are provided by lysine 340, arginine 369, serine 370, and lysine 391. Residue lysine 340 is the Proton acceptor of the active site.

Belongs to the enolase family. It depends on Mg(2+) as a cofactor.

It localises to the cytoplasm. The protein resides in the secreted. Its subcellular location is the cell surface. The enzyme catalyses (2R)-2-phosphoglycerate = phosphoenolpyruvate + H2O. The protein operates within carbohydrate degradation; glycolysis; pyruvate from D-glyceraldehyde 3-phosphate: step 4/5. In terms of biological role, catalyzes the reversible conversion of 2-phosphoglycerate (2-PG) into phosphoenolpyruvate (PEP). It is essential for the degradation of carbohydrates via glycolysis. In Aster yellows witches'-broom phytoplasma (strain AYWB), this protein is Enolase.